Here is a 366-residue protein sequence, read N- to C-terminus: Alanine racemase (366 aa).

Residue K40 is the Proton acceptor; specific for D-alanine of the active site. An N6-(pyridoxal phosphate)lysine modification is found at K40. R136 contributes to the substrate binding site. Y263 serves as the catalytic Proton acceptor; specific for L-alanine. M310 serves as a coordination point for substrate.

This sequence belongs to the alanine racemase family. Pyridoxal 5'-phosphate serves as cofactor.

It carries out the reaction L-alanine = D-alanine. Its pathway is amino-acid biosynthesis; D-alanine biosynthesis; D-alanine from L-alanine: step 1/1. Catalyzes the interconversion of L-alanine and D-alanine. May also act on other amino acids. The sequence is that of Alanine racemase (alr) from Streptococcus pyogenes serotype M28 (strain MGAS6180).